An 833-amino-acid chain; its full sequence is Zinc phosphodiesterase ELAC protein 2 homolog (833 aa).

A mitochondrion-targeting transit peptide spans 1-19; the sequence is MLGAIARKTVENRILVSRH. Residues 624 to 646 are compositionally biased toward pro residues; it reads LTPPGSPGGPPGKRPRLPSPHLP. Positions 624–652 are disordered; that stretch reads LTPPGSPGGPPGKRPRLPSPHLPPSRDVL.

Belongs to the RNase Z family. As to quaternary structure, homodimer. Requires Zn(2+) as cofactor. In terms of tissue distribution, highly expressed in the germline.

It localises to the mitochondrion. It is found in the nucleus. It catalyses the reaction Endonucleolytic cleavage of RNA, removing extra 3' nucleotides from tRNA precursor, generating 3' termini of tRNAs. A 3'-hydroxy group is left at the tRNA terminus and a 5'-phosphoryl group is left at the trailer molecule.. Functionally, zinc phosphodiesterase, which displays some tRNA 3'-processing endonuclease activity. Probably involved in tRNA maturation, by removing a 3'-trailer from precursor tRNA. Involved in germline proliferation. May be required for both mitosis and meiosis in germ cells. Does not regulate the mitochondrial unfolded protein response following mitochondrial stress. Its function is as follows. Plays a role in mitochondrial unfolded protein response. Upon mitochondrial stress is exported from the nucleus where its tRNA endonuclease activity is negatively regulated. In response to mitochondrial stress, might be involved in activating a transcriptional response in an ATFS-1- and DVE-1-dependent manner. May play a role in negatively regulating the mitochondrial membrane potential. The sequence is that of Zinc phosphodiesterase ELAC protein 2 homolog from Caenorhabditis elegans.